Here is a 416-residue protein sequence, read N- to C-terminus: Putative L-glutamine:3-amino-2,3-dideoxy-scyllo-inosose aminotransferase (416 aa).

N6-(pyridoxal phosphate)lysine is present on Lys-199.

It belongs to the DegT/DnrJ/EryC1 family. L-glutamine:2-deoxy-scyllo-inosose/scyllo-inosose aminotransferase subfamily. It depends on pyridoxal 5'-phosphate as a cofactor.

The catalysed reaction is 3-amino-2,3-dideoxy-scyllo-inosose + L-glutamine = 2-deoxystreptamine + 2-oxoglutaramate. It participates in metabolic intermediate biosynthesis; 2-deoxystreptamine biosynthesis; 2-deoxystreptamine from D-glucose 6-phosphate: step 4/4. It functions in the pathway antibiotic biosynthesis; tobramycin biosynthesis. Its function is as follows. Catalyzes the transamination of 3-amino-2,3-dideoxy-scyllo-inosose (amino-DOI) into 2-deoxystreptamine (DOS). In Streptoalloteichus tenebrarius (strain ATCC 17920 / DSM 40477 / JCM 4838 / CBS 697.72 / NBRC 16177 / NCIMB 11028 / NRRL B-12390 / A12253. 1 / ISP 5477) (Streptomyces tenebrarius), this protein is Putative L-glutamine:3-amino-2,3-dideoxy-scyllo-inosose aminotransferase (tobS2).